We begin with the raw amino-acid sequence, 688 residues long: PTS system glucoside-specific EIICBA component (688 aa).

A PTS EIIC type-1 domain is found at 3-427 (KKLFGQLQRI…FKLKTPGRED (425 aa)). A run of 10 helical transmembrane segments spans residues 12–32 (IGKA…LLAF), 81–101 (LGLA…YLIM), 137–157 (LVLG…MGAL), 182–202 (FVPI…SFAW), 223–243 (LTTF…LHHI), 284–304 (AFTT…AFAI), 315–335 (VVGG…ITEP), 340–360 (FLFV…TSFL), 364–384 (LLGV…ILYG), and 395–415 (LVIP…DFAI). Positions 438 to 519 (AKLPFDVLDA…AKIMSGEITK (82 aa)) constitute a PTS EIIB type-1 domain. Cys460 acts as the Phosphocysteine intermediate; for EIIB activity in catalysis. The PTS EIIA type-1 domain occupies 560–664 (DQVFAGKMMG…SIVTPMIITN (105 aa)). The active-site Tele-phosphohistidine intermediate; for EIIA activity is the His612.

Its subcellular location is the cell membrane. In terms of biological role, the phosphoenolpyruvate-dependent sugar phosphotransferase system (sugar PTS), a major carbohydrate active -transport system, catalyzes the phosphorylation of incoming sugar substrates concomitantly with their translocation across the cell membrane. This system is involved in alpha- and beta-glucoside transport. In Staphylococcus aureus (strain Mu3 / ATCC 700698), this protein is PTS system glucoside-specific EIICBA component (glcB).